Reading from the N-terminus, the 391-residue chain is Galactokinase (391 aa).

34–37 (EHTD) contributes to the substrate binding site. 121–127 (GAGLSSS) serves as a coordination point for ATP. 2 residues coordinate Mg(2+): serine 127 and glutamate 159. Aspartate 171 functions as the Proton acceptor in the catalytic mechanism. Tyrosine 220 contacts substrate.

This sequence belongs to the GHMP kinase family. GalK subfamily.

The protein resides in the cytoplasm. It carries out the reaction alpha-D-galactose + ATP = alpha-D-galactose 1-phosphate + ADP + H(+). Its pathway is carbohydrate metabolism; galactose metabolism. Its function is as follows. Catalyzes the transfer of the gamma-phosphate of ATP to D-galactose to form alpha-D-galactose-1-phosphate (Gal-1-P). In Roseiflexus sp. (strain RS-1), this protein is Galactokinase.